The chain runs to 101 residues: Therostasin (101 aa).

A signal peptide spans 1–19 (MRGLAVLLLVACFCSVAFG). 2 consecutive Antistasin-like domains span residues 21–46 (CENT…TCLC) and 49–75 (CNDA…FCTC).

In terms of tissue distribution, salivary glands.

Its subcellular location is the secreted. Potent inhibitor of factor Xa. It also inhibits trypsin in a weaker manner. The sequence is that of Therostasin from Theromyzon tessulatum (Duck leech).